The following is a 154-amino-acid chain: Superoxide dismutase [Cu-Zn] 1 (154 aa).

The Cu cation site is built by His47, His49, and His64. Cys58 and Cys147 are disulfide-bonded. The Zn(2+) site is built by His64, His72, His81, and Asp84. His121 contributes to the Cu cation binding site. Arg144 serves as a coordination point for substrate.

This sequence belongs to the Cu-Zn superoxide dismutase family. Homodimer. Requires Cu cation as cofactor. It depends on Zn(2+) as a cofactor.

It localises to the cytoplasm. It carries out the reaction 2 superoxide + 2 H(+) = H2O2 + O2. Destroys radicals which are normally produced within the cells and which are toxic to biological systems. The chain is Superoxide dismutase [Cu-Zn] 1 (SOD1) from Debaryomyces hansenii (strain ATCC 36239 / CBS 767 / BCRC 21394 / JCM 1990 / NBRC 0083 / IGC 2968) (Yeast).